Reading from the N-terminus, the 295-residue chain is Multistep phosphorelay regulator 1 (295 aa).

The segment at 89–110 (KSENNQQLAANETAGAPEGTEE) is disordered. Over residues 97–106 (AANETAGAPE) the composition is skewed to low complexity. The HPt domain occupies 182–284 (EHEFSKSIVW…NDFYKDARAY (103 aa)). Histidine 221 carries the post-translational modification Phosphohistidine.

Its function is as follows. Binds to the msc4 response regulator which is part of a multistep phosphorelay system that transmits oxidative stress signals to the spc1 MAPK cascade. This Schizosaccharomyces pombe (strain 972 / ATCC 24843) (Fission yeast) protein is Multistep phosphorelay regulator 1 (mpr1).